The chain runs to 368 residues: DNA replication and repair protein RecF (368 aa).

30 to 37 (GRNGSGKT) contacts ATP.

The protein belongs to the RecF family.

Its subcellular location is the cytoplasm. In terms of biological role, the RecF protein is involved in DNA metabolism; it is required for DNA replication and normal SOS inducibility. RecF binds preferentially to single-stranded, linear DNA. It also seems to bind ATP. This Chlorobaculum parvum (strain DSM 263 / NCIMB 8327) (Chlorobium vibrioforme subsp. thiosulfatophilum) protein is DNA replication and repair protein RecF.